Reading from the N-terminus, the 935-residue chain is Isoleucine--tRNA ligase (935 aa).

The 'HIGH' region signature appears at 58–68; it reads PYANGSIHVGH. Glutamate 558 contacts L-isoleucyl-5'-AMP. The 'KMSKS' region motif lies at 599-603; that stretch reads KMSKS. Lysine 602 contributes to the ATP binding site. The Zn(2+) site is built by cysteine 897, cysteine 900, cysteine 917, and cysteine 920.

The protein belongs to the class-I aminoacyl-tRNA synthetase family. IleS type 1 subfamily. Monomer. The cofactor is Zn(2+).

It localises to the cytoplasm. The catalysed reaction is tRNA(Ile) + L-isoleucine + ATP = L-isoleucyl-tRNA(Ile) + AMP + diphosphate. In terms of biological role, catalyzes the attachment of isoleucine to tRNA(Ile). As IleRS can inadvertently accommodate and process structurally similar amino acids such as valine, to avoid such errors it has two additional distinct tRNA(Ile)-dependent editing activities. One activity is designated as 'pretransfer' editing and involves the hydrolysis of activated Val-AMP. The other activity is designated 'posttransfer' editing and involves deacylation of mischarged Val-tRNA(Ile). The sequence is that of Isoleucine--tRNA ligase from Francisella tularensis subsp. tularensis (strain WY96-3418).